The primary structure comprises 232 residues: tRNA (guanine-N(7)-)-methyltransferase (232 aa).

Glu-63, Glu-88, Asp-115, and Asp-137 together coordinate S-adenosyl-L-methionine. Asp-137 is a catalytic residue. Substrate-binding positions include Lys-141, Asp-173, and 211 to 214; that span reads TRYE.

It belongs to the class I-like SAM-binding methyltransferase superfamily. TrmB family.

It carries out the reaction guanosine(46) in tRNA + S-adenosyl-L-methionine = N(7)-methylguanosine(46) in tRNA + S-adenosyl-L-homocysteine. Its pathway is tRNA modification; N(7)-methylguanine-tRNA biosynthesis. Its function is as follows. Catalyzes the formation of N(7)-methylguanine at position 46 (m7G46) in tRNA. This Agrobacterium fabrum (strain C58 / ATCC 33970) (Agrobacterium tumefaciens (strain C58)) protein is tRNA (guanine-N(7)-)-methyltransferase.